The sequence spans 376 residues: Drebrin-like protein B (376 aa).

The ADF-H domain maps to 2 to 133 (SVNLSKNGAA…EPESIMEKVA (132 aa)). Residues 175–231 (KENFWAKAEKDEEERRIEEHRRANVEKDRLERERKEREQREAEERERRFRERSKEID) adopt a coiled-coil conformation. The segment covering 202–242 (DRLERERKEREQREAEERERRFRERSKEIDGHRKQQEEVEK) has biased composition (basic and acidic residues). Residues 202–288 (DRLERERKER…FTASQQEEEN (87 aa)) form a disordered region. The span at 268–283 (ESGSVSAQPEQFTASQ) shows a compositional bias: polar residues. An SH3 domain is found at 317–376 (DSGMCARALYDYQAADDTEISFDPDDVIIQIEMIDDGWWRGVAPSGHFGMFPANYVELLE).

The protein belongs to the ABP1 family.

The protein resides in the cytoplasm. The protein localises to the cytoskeleton. It localises to the cell projection. Its subcellular location is the lamellipodium. It is found in the ruffle. The protein resides in the cell cortex. The protein localises to the cytosol. It localises to the synapse. Its subcellular location is the perikaryon. It is found in the neuron projection. The protein resides in the cell membrane. The protein localises to the cytoplasmic vesicle. It localises to the clathrin-coated vesicle membrane. Its subcellular location is the golgi apparatus membrane. It is found in the podosome. The protein resides in the early endosome. The protein localises to the dendrite. It localises to the postsynaptic density. Its function is as follows. Adapter protein that binds F-actin and dynamin, and thereby plays a role in receptor-mediated endocytosis. Plays a role in the reorganization of the actin cytoskeleton, formation of cell projections, such as neurites, in neuron morphogenesis and synapse formation. Does not bind G-actin and promote actin polymerization by itself, but excerts its functions by interaction with other proteins. Required for the formation of organized podosome rosettes. This Xenopus laevis (African clawed frog) protein is Drebrin-like protein B (dbnl-b).